Reading from the N-terminus, the 282-residue chain is MYNYTIYHPVKISGRGLYTGINSTITIYPELPHVGIYFLRTDLTDYPIVPIIPSTLLVLNSKLSTVLGFHDDYSIMLIEHLMSAISLSQLTDLKIILEGPEIPILDGSSIIWLKLLQQAKIYITSLSNCIIFKSSCTFFIQTKDTFIISFPYTSLAINTGIDFKNCLAIKSQWITILDLLINRFELVGIASSRTFGDFNQINILINEGFFQGANLYNALAFQLGNWCNGPLRFICEPAKHKVLDLIGDLRLLGVYNMFFLIGYKTNHFVNSQLVQFFKKLDK.

His80, His240, and Asp244 together coordinate Zn(2+). The Proton donor role is filled by His267.

This sequence belongs to the LpxC family. Zn(2+) is required as a cofactor.

The protein resides in the plastid. It localises to the chloroplast. It catalyses the reaction a UDP-3-O-[(3R)-3-hydroxyacyl]-N-acetyl-alpha-D-glucosamine + H2O = a UDP-3-O-[(3R)-3-hydroxyacyl]-alpha-D-glucosamine + acetate. The protein operates within glycolipid biosynthesis; lipid IV(A) biosynthesis; lipid IV(A) from (3R)-3-hydroxytetradecanoyl-[acyl-carrier-protein] and UDP-N-acetyl-alpha-D-glucosamine: step 2/6. Functionally, catalyzes the hydrolysis of UDP-3-O-myristoyl-N-acetylglucosamine to form UDP-3-O-myristoylglucosamine and acetate. Involved in the biosynthesis of lipid A, a phosphorylated glycolipid that in bacteria anchors the lipopolysaccharide to the outer membrane of the cell. The target for the lipopolysaccharides produced in the chloroplast could either be the cell envelope of the eukaryote or the plastid membrane. The chain is UDP-3-O-acyl-N-acetylglucosamine deacetylase from Cyanidium caldarium (Red alga).